A 282-amino-acid polypeptide reads, in one-letter code: NAD-dependent protein deacetylase 1 (282 aa).

One can recognise a Deacetylase sirtuin-type domain in the interval 1-282; it reads MTVGRAESPE…ADELSPLPTH (282 aa). NAD(+) is bound by residues 25-45 and 101-104; these read GAGI…SPPS and QNVD. The active-site Proton acceptor is the His119. Cys127, Cys130, Cys181, and Cys184 together coordinate Zn(2+). Residues 221–223, 247–249, and Cys265 each bind NAD(+); these read GSS and NRG.

The protein belongs to the sirtuin family. Class II subfamily. Zn(2+) serves as cofactor.

Its subcellular location is the cytoplasm. It catalyses the reaction N(6)-acetyl-L-lysyl-[protein] + NAD(+) + H2O = 2''-O-acetyl-ADP-D-ribose + nicotinamide + L-lysyl-[protein]. Its function is as follows. NAD-dependent protein deacetylase which modulates the activities of several enzymes which are inactive in their acetylated form. The chain is NAD-dependent protein deacetylase 1 from Mycobacterium avium (strain 104).